Reading from the N-terminus, the 502-residue chain is Probable glycine dehydrogenase (decarboxylating) subunit 2 (502 aa).

K273 is subject to N6-(pyridoxal phosphate)lysine.

This sequence belongs to the GcvP family. C-terminal subunit subfamily. In terms of assembly, the glycine cleavage system is composed of four proteins: P, T, L and H. In this organism, the P 'protein' is a heterodimer of two subunits. The cofactor is pyridoxal 5'-phosphate.

The enzyme catalyses N(6)-[(R)-lipoyl]-L-lysyl-[glycine-cleavage complex H protein] + glycine + H(+) = N(6)-[(R)-S(8)-aminomethyldihydrolipoyl]-L-lysyl-[glycine-cleavage complex H protein] + CO2. The glycine cleavage system catalyzes the degradation of glycine. The P protein binds the alpha-amino group of glycine through its pyridoxal phosphate cofactor; CO(2) is released and the remaining methylamine moiety is then transferred to the lipoamide cofactor of the H protein. This is Probable glycine dehydrogenase (decarboxylating) subunit 2 from Pyrococcus furiosus (strain ATCC 43587 / DSM 3638 / JCM 8422 / Vc1).